Consider the following 133-residue polypeptide: Large ribosomal subunit protein uL22 (133 aa).

This sequence belongs to the universal ribosomal protein uL22 family. As to quaternary structure, part of the 50S ribosomal subunit.

Functionally, this protein binds specifically to 23S rRNA; its binding is stimulated by other ribosomal proteins, e.g. L4, L17, and L20. It is important during the early stages of 50S assembly. It makes multiple contacts with different domains of the 23S rRNA in the assembled 50S subunit and ribosome. In terms of biological role, the globular domain of the protein is located near the polypeptide exit tunnel on the outside of the subunit, while an extended beta-hairpin is found that lines the wall of the exit tunnel in the center of the 70S ribosome. This chain is Large ribosomal subunit protein uL22, found in Nocardia farcinica (strain IFM 10152).